The sequence spans 489 residues: Phenylalanine--tRNA ligase alpha subunit (489 aa).

L-phenylalanine contacts are provided by residues T316, 355–357 (QLD), F395, and F420.

The protein belongs to the class-II aminoacyl-tRNA synthetase family. Phe-tRNA synthetase alpha subunit type 2 subfamily. In terms of assembly, tetramer of two alpha and two beta subunits. It depends on Mg(2+) as a cofactor.

The protein resides in the cytoplasm. The catalysed reaction is tRNA(Phe) + L-phenylalanine + ATP = L-phenylalanyl-tRNA(Phe) + AMP + diphosphate + H(+). This chain is Phenylalanine--tRNA ligase alpha subunit, found in Pyrobaculum aerophilum (strain ATCC 51768 / DSM 7523 / JCM 9630 / CIP 104966 / NBRC 100827 / IM2).